We begin with the raw amino-acid sequence, 244 residues long: Signal recognition particle receptor subunit beta (244 aa).

The chain crosses the membrane as a helical span at residues 7–23 (IIACLLVIGTTIALIAV). GTP contacts are provided by residues 45–53 (GPQNSGKTS), 66–69 (TVVS), G90, and 154–157 (NKSE).

The protein belongs to the SRP receptor beta subunit family. In terms of assembly, heterodimer of an alpha and a beta chain.

Its subcellular location is the endoplasmic reticulum membrane. Its function is as follows. Component of the signal recognition particle (SRP) complex receptor (SR). Ensures, in conjunction with the SRP complex, the correct targeting of the nascent secretory proteins to the endoplasmic reticulum membrane system. May mediate the membrane association of SR. This Saccharomyces cerevisiae (strain ATCC 204508 / S288c) (Baker's yeast) protein is Signal recognition particle receptor subunit beta (SRP102).